The sequence spans 313 residues: Protein FixB (313 aa).

Residue 255–283 (LYLAVGISGQIQHMVGANASQTIFAINKD) coordinates FAD.

It belongs to the ETF alpha-subunit/FixB family. In terms of assembly, heterodimer of FixA and FixB.

It functions in the pathway amine and polyamine metabolism; carnitine metabolism. Required for anaerobic carnitine reduction. May bring reductant to CaiA. The protein is Protein FixB of Shigella flexneri.